The chain runs to 367 residues: Innexin inx2 (367 aa).

Over 1 to 22 (MFDVFGSVKGLLKIDQVCIDNN) the chain is Cytoplasmic. A helical transmembrane segment spans residues 23–43 (VFRMHYKATVIILIAFSLLVT). Residues 44–109 (SRQYIGDPID…EDEVKYHKYY (66 aa)) are Extracellular-facing. A helical membrane pass occupies residues 110–130 (QWVCFVLFFQAILFYVPRYLW). The segment at 130-179 (WKSWEGGRLKMLVMDLNSPIVNDECKNDRKKILVDYFIGNLNRHNFYAFR) is interaction with shg. Topologically, residues 131 to 179 (KSWEGGRLKMLVMDLNSPIVNDECKNDRKKILVDYFIGNLNRHNFYAFR) are cytoplasmic. A helical transmembrane segment spans residues 180–200 (FFVCEALNFVNVIGQIYFVDF). Residues 201–266 (FLDGEFSTYG…VLPLNIVNEK (66 aa)) are Extracellular-facing. A helical transmembrane segment spans residues 267 to 287 (IYVFLWFWFIILSIMSGISLI). The Cytoplasmic portion of the chain corresponds to 288 to 367 (YRIAVVAGPK…HSAHKRPFDA (80 aa)).

It belongs to the pannexin family. Monomer and heterooligomer with ogre or Inx3 (via cytoplasmic C-terminal region). Interacts (via cytoplasmic loop) with shg (via cytoplasmic region). Interacts with arm. In ovary, expressed in inner germarial sheath cells, prefollicular cells, follicle cells, nurse cells and oocytes. Expressed in embryonic epithelial cells. Expressed in foregut and hindgut from stage 11-17, segmentally repeated tracheal placodes at stage 14, salivary gland at stage 16 and proventriculus at stage 16-17 (at protein level). During germband extension stage (stage 7), expressed in epidermal epithelial cells. Expressed in cephalic furrow. Repeating epidermal pattern emerges at stage 11, refines to one or two cells at each side of the segment borders by stage 13. Expressed in the imaginal wing disk. In pupae, expressed in the CNS and in primary, secondary and tertiary pigment cells of the retina. Expressed in optic lamina of the adult CNS.

Its subcellular location is the cell membrane. The protein resides in the cell junction. It localises to the gap junction. The protein localises to the cytoplasm. It is found in the apical cell membrane. Its subcellular location is the apicolateral cell membrane. The protein resides in the basolateral cell membrane. It localises to the lateral cell membrane. Structural components of the gap junctions. Involved in gap junctional communication between germline and somatic cells which is essential for normal oogenesis. In embryonic epidermis, required for epithelial morphogenesis. Required for keyhole formation during early stages of proventriculus development in response to wg signaling. In follicle cells, promotes the formation of egg chambers in part through regulation of shg and baz at the boundary between germ cells and follicle cells. In inner germarial sheath cells, required for survival of early germ cells and for cyst formation. This chain is Innexin inx2 (Inx2), found in Drosophila melanogaster (Fruit fly).